The following is a 294-amino-acid chain: Cytidine deaminase (294 aa).

CMP/dCMP-type deaminase domains lie at 48 to 168 and 186 to 294; these read DEDA…FGPK and VSGD…VLLG. 89–91 lines the substrate pocket; sequence NME. Residue H102 participates in Zn(2+) binding. E104 acts as the Proton donor in catalysis. The Zn(2+) site is built by C129 and C132.

It belongs to the cytidine and deoxycytidylate deaminase family. As to quaternary structure, homodimer. The cofactor is Zn(2+).

It carries out the reaction cytidine + H2O + H(+) = uridine + NH4(+). The catalysed reaction is 2'-deoxycytidine + H2O + H(+) = 2'-deoxyuridine + NH4(+). Its function is as follows. This enzyme scavenges exogenous and endogenous cytidine and 2'-deoxycytidine for UMP synthesis. In Klebsiella pneumoniae subsp. pneumoniae (strain ATCC 700721 / MGH 78578), this protein is Cytidine deaminase.